A 513-amino-acid polypeptide reads, in one-letter code: MVAFFLPGPRRDPRIRRTARQGMGFLVQHLLIMGSSRILKRNQEMAMNKCSVLLNRAREFEPSRANGGYILSTSSYPQIRQYAASPDEHLRSLPSLLPPPPGQELPLAYLRAQRQSSGNYRGIQAQRRPLIDQTGALQSSFPESICLKEELQSLSMPRNSPNAGRNLVGHPHSSSKSSSKPCHFHFFRGYCKKGVNCQFFHGSVPELHNPRQVHPFASLSKLDMEIRELLIGIPPPVAVDRLPSMYFEKYGKPLRPDGWLTESQQHGRTGCSLTSLLMGLNTIRVVEREHGQYHVVLVEDARKKYMDCLGLAHSCNLMDTGTGSNQIYMTFPVHSKFTDDDVENYFKQFGPVSGVRIPYQEKRMFGFVSFLYTETVRLILSKGTAHFICGLRVLVKRYMEKSELRMTWLKSVSGSQVDSCLKVTIGHTIAKAPSKKKKEVKEQCSKDQGPIKIYRKNKQFDYREHRTSGFGVTNEHYIGNNMKKKSHRSDDLDEASAYEDSDEIILPDSLGLY.

Residues 155-180 (SMPRNSPNAGRNLVGHPHSSSKSSSK) are disordered. Positions 170–180 (HPHSSSKSSSK) are enriched in low complexity. The C3H1-type zinc-finger motif lies at 176–204 (KSSSKPCHFHFFRGYCKKGVNCQFFHGSV). The HTH OST-type domain occupies 218-299 (SLSKLDMEIR…HGQYHVVLVE (82 aa)). Residues 325-411 (NQIYMTFPVH…SELRMTWLKS (87 aa)) form the RRM domain.

The sequence is that of Putative zinc finger CCCH domain-containing protein 51 from Oryza sativa subsp. japonica (Rice).